Here is a 222-residue protein sequence, read N- to C-terminus: N-(5'-phosphoribosyl)anthranilate isomerase (222 aa).

Belongs to the TrpF family.

It carries out the reaction N-(5-phospho-beta-D-ribosyl)anthranilate = 1-(2-carboxyphenylamino)-1-deoxy-D-ribulose 5-phosphate. The protein operates within amino-acid biosynthesis; L-tryptophan biosynthesis; L-tryptophan from chorismate: step 3/5. The polypeptide is N-(5'-phosphoribosyl)anthranilate isomerase (Brucella abortus (strain S19)).